Consider the following 425-residue polypeptide: Serine--tRNA ligase (425 aa).

230–232 (TAE) provides a ligand contact to L-serine. Position 261 to 263 (261 to 263 (RQE)) interacts with ATP. Glu-284 provides a ligand contact to L-serine. Position 348–351 (348–351 (EISS)) interacts with ATP. Ser-384 contacts L-serine.

This sequence belongs to the class-II aminoacyl-tRNA synthetase family. Type-1 seryl-tRNA synthetase subfamily. Homodimer. The tRNA molecule binds across the dimer.

It is found in the cytoplasm. The enzyme catalyses tRNA(Ser) + L-serine + ATP = L-seryl-tRNA(Ser) + AMP + diphosphate + H(+). It catalyses the reaction tRNA(Sec) + L-serine + ATP = L-seryl-tRNA(Sec) + AMP + diphosphate + H(+). The protein operates within aminoacyl-tRNA biosynthesis; selenocysteinyl-tRNA(Sec) biosynthesis; L-seryl-tRNA(Sec) from L-serine and tRNA(Sec): step 1/1. Its function is as follows. Catalyzes the attachment of serine to tRNA(Ser). Is also able to aminoacylate tRNA(Sec) with serine, to form the misacylated tRNA L-seryl-tRNA(Sec), which will be further converted into selenocysteinyl-tRNA(Sec). This chain is Serine--tRNA ligase, found in Caldanaerobacter subterraneus subsp. tengcongensis (strain DSM 15242 / JCM 11007 / NBRC 100824 / MB4) (Thermoanaerobacter tengcongensis).